We begin with the raw amino-acid sequence, 319 residues long: GTP 3',8-cyclase (319 aa).

Positions 4 to 227 constitute a Radical SAM core domain; the sequence is KHGRKINYLR…VETDKSSTAL (224 aa). Arg-13 provides a ligand contact to GTP. The [4Fe-4S] cluster site is built by Cys-20 and Cys-24. Residue Tyr-26 coordinates S-adenosyl-L-methionine. Residue Cys-27 coordinates [4Fe-4S] cluster. Arg-63 is a GTP binding site. Gly-67 contributes to the S-adenosyl-L-methionine binding site. Thr-94 is a GTP binding site. Ser-118 lines the S-adenosyl-L-methionine pocket. GTP is bound at residue Lys-155. Met-189 contacts S-adenosyl-L-methionine. The [4Fe-4S] cluster site is built by Cys-249 and Cys-252. Residue 254-256 participates in GTP binding; sequence RVR. Cys-266 contacts [4Fe-4S] cluster.

Belongs to the radical SAM superfamily. MoaA family. Monomer and homodimer. It depends on [4Fe-4S] cluster as a cofactor.

The enzyme catalyses GTP + AH2 + S-adenosyl-L-methionine = (8S)-3',8-cyclo-7,8-dihydroguanosine 5'-triphosphate + 5'-deoxyadenosine + L-methionine + A + H(+). Its pathway is cofactor biosynthesis; molybdopterin biosynthesis. Its function is as follows. Catalyzes the cyclization of GTP to (8S)-3',8-cyclo-7,8-dihydroguanosine 5'-triphosphate. The protein is GTP 3',8-cyclase of Clostridium botulinum (strain Langeland / NCTC 10281 / Type F).